Reading from the N-terminus, the 495-residue chain is ATP synthase subunit beta (495 aa).

178-185 (GGAGVGKT) contributes to the ATP binding site.

The protein belongs to the ATPase alpha/beta chains family. As to quaternary structure, F-type ATPases have 2 components, CF(1) - the catalytic core - and CF(0) - the membrane proton channel. CF(1) has five subunits: alpha(3), beta(3), gamma(1), delta(1), epsilon(1). CF(0) has three main subunits: a(1), b(2) and c(9-12). The alpha and beta chains form an alternating ring which encloses part of the gamma chain. CF(1) is attached to CF(0) by a central stalk formed by the gamma and epsilon chains, while a peripheral stalk is formed by the delta and b chains.

Its subcellular location is the cell membrane. The enzyme catalyses ATP + H2O + 4 H(+)(in) = ADP + phosphate + 5 H(+)(out). Produces ATP from ADP in the presence of a proton gradient across the membrane. The catalytic sites are hosted primarily by the beta subunits. This Bifidobacterium animalis subsp. lactis (strain AD011) protein is ATP synthase subunit beta.